We begin with the raw amino-acid sequence, 363 residues long: Flagellar P-ring protein (363 aa).

An N-terminal signal peptide occupies residues 1–20 (MKLKLFLLSVLLLVSGSSQA).

Belongs to the FlgI family. As to quaternary structure, the basal body constitutes a major portion of the flagellar organelle and consists of four rings (L,P,S, and M) mounted on a central rod.

The protein resides in the periplasm. The protein localises to the bacterial flagellum basal body. Functionally, assembles around the rod to form the L-ring and probably protects the motor/basal body from shearing forces during rotation. The protein is Flagellar P-ring protein of Shewanella woodyi (strain ATCC 51908 / MS32).